The following is a 152-amino-acid chain: Large ribosomal subunit protein bL9 (152 aa).

Belongs to the bacterial ribosomal protein bL9 family.

In terms of biological role, binds to the 23S rRNA. The chain is Large ribosomal subunit protein bL9 from Thermosynechococcus vestitus (strain NIES-2133 / IAM M-273 / BP-1).